The following is a 287-amino-acid chain: Inositol-1-monophosphatase (287 aa).

Glutamate 79, aspartate 96, leucine 98, and aspartate 99 together coordinate Mg(2+). Glutamate 79 lines the substrate pocket. Residues 98-101, arginine 195, and aspartate 224 each bind substrate; that span reads LDGT. Aspartate 224 serves as a coordination point for Mg(2+).

It belongs to the inositol monophosphatase superfamily. It depends on Mg(2+) as a cofactor.

The enzyme catalyses a myo-inositol phosphate + H2O = myo-inositol + phosphate. The polypeptide is Inositol-1-monophosphatase (suhB) (Synechocystis sp. (strain ATCC 27184 / PCC 6803 / Kazusa)).